Here is a 200-residue protein sequence, read N- to C-terminus: MTDTRREQEKDERRKLQEQSRQNEAETMRLLAFEAGRQLAEIPKEAKGNEPLLENYKSGLQETRKELETTPDATKSTNANRLERDVERAIIEAQQVREAVGREKARADEFHRHAEPGETYRGRVIGRTNSYVIQADDSRPGTIILHERAAVSGAEKVKMNDHAEISYPHGRAGIVRNPQAAQHQRQRQMEKTGAGREHGR.

3 disordered regions span residues 1-27 (MTDTRREQEKDERRKLQEQSRQNEAET), 42-79 (IPKEAKGNEPLLENYKSGLQETRKELETTPDATKSTNA), and 169-200 (HGRAGIVRNPQAAQHQRQRQMEKTGAGREHGR). A compositionally biased stretch (basic and acidic residues) spans 187 to 200 (RQMEKTGAGREHGR).

This is an uncharacterized protein from Shigella flexneri.